The primary structure comprises 525 residues: MATHDLTNALDALSVTQHKHAINGIKRGIERESLRIKSDGVISAQKHPEGVGSALTNGQITTDFSESLLEFITPVSESSTQTLQQLKDLQKFTLEKMGDELLWPISMPCFIEHQDDIVIAQFGSSNVGQMKTLYREGLKNRYGSMMQAIAGVHFNISFPDSLWQSLHTLKNSDLSLEDFISDGYLALIRNFKRELWLISYLFGASPALCSSFLQGRKTDLPFKKLGKGTLYLEVGTALRLGNLGYTNSAQSSLRVMYNSLDEYVAGLKKSINTPSDIYGNLDDYTSENPKQLNKNILQIENEFYSPIRPKRNAKNGETPTDALLRAGIEYVEIRALDVNPFSEVGIDIEQFHFLDVFLTYCLLKSSPAMDWEEQTRSTENLDTVVNKGREKGLELNYFNQPRTLQSWGEDIFSQLSEVAKYMDTAYGVSYYSSTIERMATWINNPGLTYSGRYVAELEASGLDNGHYALAIAEKYKQSHQAADYQVFSKQWLEEQVTRSNDAQRAIEQSDSVSFTAFLNAYFDPK.

This sequence belongs to the glutamate--cysteine ligase type 1 family. Type 1 subfamily.

It carries out the reaction L-cysteine + L-glutamate + ATP = gamma-L-glutamyl-L-cysteine + ADP + phosphate + H(+). The protein operates within sulfur metabolism; glutathione biosynthesis; glutathione from L-cysteine and L-glutamate: step 1/2. This chain is Glutamate--cysteine ligase, found in Pseudoalteromonas translucida (strain TAC 125).